The chain runs to 174 residues: uncharacterized protein (174 aa).

Residues 1 to 55 (MGCVVSKSDDIKNENESRQRNQASSSQQPSSSQTPSKQIGIAAKDSEEQPQEVSY) are disordered. A lipid anchor (N-myristoyl glycine) is attached at Gly-2. The span at 7-19 (KSDDIKNENESRQ) shows a compositional bias: basic and acidic residues. A compositionally biased stretch (low complexity) spans 20–38 (RNQASSSQQPSSSQTPSKQ).

This is an uncharacterized protein from Dictyostelium discoideum (Social amoeba).